We begin with the raw amino-acid sequence, 524 residues long: MSQLSLSWLGLGPEVAFPWKTLLLLGASWILARILIQIYAAYRNYRHLHGFPQPPKRNWLMGHVGMVTPTEQGLKELTRLVGTYPQGFLMWIGPMVPVITLCHSDIVRSILNASAAVALKDVIFYSILKPWLGDGLLVSAGDKWSRHRRMLTPAFHFNILKPYVKIFNDSTNIMHAKWQRLISDGSARLDMFEHVSLMTLDSLQKCVFSFDSNCQEKSSEYIAAILELSALVAKRHQQPLMFMDLLYNLTPDGMRFRKACNVVHEFTDAVIRERHRTLPDQGLDDFLKSKAKSKTLDFIDVLLLSKDEDGKELSDEDIRAEADTFMFEGHDTTASGLSWILYNLARHPEYQERCRQEVQELLRGREPEEIEWDDLAQLPFLTMCIKESLRLHPPVTVISRCCTQDILLPDGRTIPKGIICLISIFGIHHNPSVWPDPEVYDPFRFDPENIKDSSPLAFIPFSAGPRNCIGQTFAMSEMKVALALTLLRFRLLPDDKEPRRQPELILRAEGGLWLRVEPLSAGAH.

Positions 328 and 468 each coordinate heme.

It belongs to the cytochrome P450 family. Requires heme as cofactor.

It localises to the endoplasmic reticulum membrane. The protein resides in the microsome membrane. It catalyses the reaction leukotriene B4 + reduced [NADPH--hemoprotein reductase] + O2 = 20-hydroxy-leukotriene B4 + oxidized [NADPH--hemoprotein reductase] + H2O + H(+). It functions in the pathway lipid metabolism; leukotriene B4 degradation. In terms of biological role, cytochromes P450 are a group of heme-thiolate monooxygenases. Catalyzes the omega-hydroxylation of LTB4. The chain is Leukotriene-B4 omega-hydroxylase 3 (Cyp4f14) from Mus musculus (Mouse).